Here is a 332-residue protein sequence, read N- to C-terminus: Probable sugar phosphate/phosphate translocator At1g53660 (332 aa).

Transmembrane regions (helical) follow at residues 19–39 (ASIL…KWVL), 46–66 (FPYP…LCFL), 82–102 (LEIY…TLWL), 120–140 (AIMP…IMSC), 143–163 (LLIM…ELNI), 165–185 (WVGV…LILM), 199–219 (LSLM…PWIF), 233–253 (LVLS…FLVI), 259–281 (LTIR…LLFA), and 285–304 (LTII…ATYN). The span at 312–322 (ESITLVSQSPK) shows a compositional bias: polar residues. Residues 312–332 (ESITLVSQSPKNSDKKPDGPL) are disordered. Residues 323–332 (NSDKKPDGPL) show a composition bias toward basic and acidic residues.

This sequence belongs to the TPT transporter family. TPT (TC 2.A.7.9) subfamily.

The protein localises to the membrane. This is Probable sugar phosphate/phosphate translocator At1g53660 from Arabidopsis thaliana (Mouse-ear cress).